A 181-amino-acid polypeptide reads, in one-letter code: Adenine phosphoribosyltransferase (181 aa).

It belongs to the purine/pyrimidine phosphoribosyltransferase family. As to quaternary structure, homodimer.

The protein localises to the cytoplasm. The enzyme catalyses AMP + diphosphate = 5-phospho-alpha-D-ribose 1-diphosphate + adenine. Its pathway is purine metabolism; AMP biosynthesis via salvage pathway; AMP from adenine: step 1/1. Its function is as follows. Catalyzes a salvage reaction resulting in the formation of AMP, that is energically less costly than de novo synthesis. The sequence is that of Adenine phosphoribosyltransferase from Pseudoalteromonas translucida (strain TAC 125).